Consider the following 543-residue polypeptide: MTLIQDAELKPRMGSFKKRSSSKNLRYSMTKRRRSSKVMSVEIIEDVHDAEELKAVDAFRQSLILDELLPEKHDDYHMMLRFLKARKFDLEKTKQMWTEMLRWRKEFGADTVMEEFDFKEIDEVLKYYPQGHHGVDKEGRPVYIERLGLVDSTKLMQVTTMDRYVNYHVMEFERTFNVKFPACSIAAKKHIDQSTTILDVQGVGLKNFNKAARDLITRLQKVDGDNYPETLNRMFIINAGSGFRMLWNTVKSFLDPKTTAKIHVLGNKYQSKLLEIIDESELPEFLGGSCTCADNGGCMRSDKGPWKNPEIMKRVHNGDHKCSKGSQAENSGEKTIPEEDDSTTEPASEEEKASKEVEIVPAAHPAWNMPEAHKFSLSKKEVYAIQEACNNATTEGGRSPIFTGVMALVMGVVTMIKVTKNVPRKLTESTLYSSPVYCDDASMNKSAMQSEKMTVPAISGEDFMAIMKRMAELEQKVTVLSAQPTVMPPDKEEMLNAAISRSNVLEQELAATKKALDDSLGRQEELVAYIEKKKKKKKLFNYW.

A CRAL-TRIO domain is found at 120 to 294; sequence EIDEVLKYYP…FLGGSCTCAD (175 aa). Positions 316–356 are disordered; the sequence is HNGDHKCSKGSQAENSGEKTIPEEDDSTTEPASEEEKASKE. Residues 490–526 adopt a coiled-coil conformation; that stretch reads DKEEMLNAAISRSNVLEQELAATKKALDDSLGRQEEL.

It belongs to the SFH family. As to expression, specifically expressed in flowers.

It localises to the golgi apparatus membrane. Its subcellular location is the cell membrane. Its function is as follows. Required for transport of secretory proteins from the Golgi complex. Catalyzes the transfer of phosphatidylinositol and phosphatidylcholine between membranes in vitro. In Arabidopsis thaliana (Mouse-ear cress), this protein is Phosphatidylinositol/phosphatidylcholine transfer protein SFH12 (SFH12).